The chain runs to 298 residues: Acetylglutamate kinase (298 aa).

Substrate is bound by residues 69–70, Arg-91, and Asn-196; that span reads GG.

Belongs to the acetylglutamate kinase family. ArgB subfamily.

It is found in the cytoplasm. It carries out the reaction N-acetyl-L-glutamate + ATP = N-acetyl-L-glutamyl 5-phosphate + ADP. It functions in the pathway amino-acid biosynthesis; L-arginine biosynthesis; N(2)-acetyl-L-ornithine from L-glutamate: step 2/4. In terms of biological role, catalyzes the ATP-dependent phosphorylation of N-acetyl-L-glutamate. The protein is Acetylglutamate kinase of Rhodopseudomonas palustris (strain TIE-1).